We begin with the raw amino-acid sequence, 252 residues long: Hydroxyacylglutathione hydrolase (252 aa).

Zn(2+)-binding residues include His-54, His-56, Asp-58, His-59, His-113, Asp-132, and His-170.

It belongs to the metallo-beta-lactamase superfamily. Glyoxalase II family. As to quaternary structure, monomer. It depends on Zn(2+) as a cofactor.

The enzyme catalyses an S-(2-hydroxyacyl)glutathione + H2O = a 2-hydroxy carboxylate + glutathione + H(+). The protein operates within secondary metabolite metabolism; methylglyoxal degradation; (R)-lactate from methylglyoxal: step 2/2. In terms of biological role, thiolesterase that catalyzes the hydrolysis of S-D-lactoyl-glutathione to form glutathione and D-lactic acid. This is Hydroxyacylglutathione hydrolase from Gloeobacter violaceus (strain ATCC 29082 / PCC 7421).